Reading from the N-terminus, the 315-residue chain is Methionyl-tRNA formyltransferase (315 aa).

113–116 (SLLP) is a binding site for (6S)-5,6,7,8-tetrahydrofolate.

This sequence belongs to the Fmt family.

It carries out the reaction L-methionyl-tRNA(fMet) + (6R)-10-formyltetrahydrofolate = N-formyl-L-methionyl-tRNA(fMet) + (6S)-5,6,7,8-tetrahydrofolate + H(+). In terms of biological role, attaches a formyl group to the free amino group of methionyl-tRNA(fMet). The formyl group appears to play a dual role in the initiator identity of N-formylmethionyl-tRNA by promoting its recognition by IF2 and preventing the misappropriation of this tRNA by the elongation apparatus. This Escherichia coli O45:K1 (strain S88 / ExPEC) protein is Methionyl-tRNA formyltransferase.